The sequence spans 309 residues: Transcription termination/antitermination protein NusG (309 aa).

Disordered stretches follow at residues 1–24 and 58–91; these read MSDPNLNDDATEPRGLAADTADDE and EGDHIAETDEDIEAGAVETDEDVETDTDEDVEAG. The segment covering 65-91 has biased composition (acidic residues); it reads TDEDIEAGAVETDEDVETDTDEDVEAG.

The protein belongs to the NusG family.

In terms of biological role, participates in transcription elongation, termination and antitermination. This Streptomyces galbus protein is Transcription termination/antitermination protein NusG.